A 235-amino-acid polypeptide reads, in one-letter code: uncharacterized protein (235 aa).

This is an uncharacterized protein from Shigella flexneri.